The primary structure comprises 557 residues: MAAQGFLLIATFLLVLMVLARPLGSGLARLINDIPLPGTTGVERVLFRALGVSDREMNWKQYLCAILGLNMLGLAVLFFMLLGQHYLPLNPQQLPGLSWDLALNTAVSFVTNTNWQSYSGETTLSYFSQMAGLTVQNFLSAASGIAVIFALIRAFTRQSMSTLGNAWVDLLRITLWVLVPVALLIALFFIQQGALQNFLPYQAVNTVEGAQQLLPMGPVASQEAIKMLGTNGGGFFNANSSHPFENPTALTNFVQMLAIFLIPTALCFAFGEVTGDRRQGRMLLWAMSVIFVICVGVVMWAEVQGNPHLLALGTDSSINMEGKESRFGVLVSSLFAVVTTAASCGAVIAMHDSFTALGGMVPMWLMQIGEVVFGGVGSGLYGMMLFVLLAVFIAGLMIGRTPEYLGKKIDVREMKLTALAILVTPTLVLMGAALAMMTDAGRSAMLNPGPHGFSEVLYAVSSAANNNGSAFAGLSANSPFWNCLLAFCMFVGRFGVIIPVMAIAGSLVSKKSQAASSGTLPTHGPLFVGLLIGTVLLVGALTFIPALALGPVAEYLS.

A run of 12 helical transmembrane segments spans residues 5–25 (GFLLIATFLLVLMVLARPLGS), 63–83 (LCAILGLNMLGLAVLFFMLLG), 132–152 (GLTVQNFLSAASGIAVIFALI), 170–190 (LLRITLWVLVPVALLIALFFI), 253–273 (FVQMLAIFLIPTALCFAFGEV), 283–303 (LLWAMSVIFVICVGVVMWAEV), 329–349 (VLVSSLFAVVTTAASCGAVIA), 356–376 (ALGGMVPMWLMQIGEVVFGGV), 379–399 (GLYGMMLFVLLAVFIAGLMIG), 416–436 (LTALAILVTPTLVLMGAALAM), 484–504 (LLAFCMFVGRFGVIIPVMAIA), and 526–546 (LFVGLLIGTVLLVGALTFIPA).

Belongs to the KdpA family. The system is composed of three essential subunits: KdpA, KdpB and KdpC.

It is found in the cell inner membrane. Its function is as follows. Part of the high-affinity ATP-driven potassium transport (or Kdp) system, which catalyzes the hydrolysis of ATP coupled with the electrogenic transport of potassium into the cytoplasm. This subunit binds the periplasmic potassium ions and delivers the ions to the membrane domain of KdpB through an intramembrane tunnel. The polypeptide is Potassium-transporting ATPase potassium-binding subunit (Escherichia coli O9:H4 (strain HS)).